Reading from the N-terminus, the 68-residue chain is Guanine nucleotide-binding protein G(I)/G(S)/G(O) subunit gamma-5 (68 aa).

At S2 the chain carries N-acetylserine. A Phosphoserine modification is found at S2. C65 is modified (cysteine methyl ester). C65 carries S-geranylgeranyl cysteine lipidation. Positions 66-68 are cleaved as a propeptide — removed in mature form; that stretch reads SFL.

The protein belongs to the G protein gamma family. As to quaternary structure, g proteins are composed of 3 units, alpha, beta and gamma. Expressed in a variety of tissues.

The protein localises to the cell membrane. Guanine nucleotide-binding proteins (G proteins) are involved as a modulator or transducer in various transmembrane signaling systems. The beta and gamma chains are required for the GTPase activity, for replacement of GDP by GTP, and for G protein-effector interaction. The protein is Guanine nucleotide-binding protein G(I)/G(S)/G(O) subunit gamma-5 (GNG5) of Bos taurus (Bovine).